The following is a 490-amino-acid chain: Tryptophan 5-hydroxylase 2 (490 aa).

Serine 19 carries the phosphoserine modification. The disordered stretch occupies residues 34 to 62 (LTLNKANSGKNDDKGNKGSSKNETATESG). The span at 50 to 62 (KGSSKNETATESG) shows a compositional bias: polar residues. In terms of domain architecture, ACT spans 65–140 (AVVFSLKNEV…TIVTLNPPEN (76 aa)). Residues histidine 318, histidine 323, and glutamate 363 each contribute to the Fe cation site.

This sequence belongs to the biopterin-dependent aromatic amino acid hydroxylase family. In terms of assembly, interacts with DNAJC12. The cofactor is Fe(2+).

The catalysed reaction is (6R)-L-erythro-5,6,7,8-tetrahydrobiopterin + L-tryptophan + O2 = 5-hydroxy-L-tryptophan + (4aS,6R)-4a-hydroxy-L-erythro-5,6,7,8-tetrahydrobiopterin. Its pathway is aromatic compound metabolism; serotonin biosynthesis; serotonin from L-tryptophan: step 1/2. This chain is Tryptophan 5-hydroxylase 2 (TPH2), found in Macaca mulatta (Rhesus macaque).